Reading from the N-terminus, the 243-residue chain is Carboxy-S-adenosyl-L-methionine synthase (243 aa).

S-adenosyl-L-methionine contacts are provided by residues Y40, 65–67 (GCS), 90–91 (DN), 118–119 (DI), N133, and R200.

This sequence belongs to the class I-like SAM-binding methyltransferase superfamily. Cx-SAM synthase family. As to quaternary structure, homodimer.

The catalysed reaction is prephenate + S-adenosyl-L-methionine = carboxy-S-adenosyl-L-methionine + 3-phenylpyruvate + H2O. Functionally, catalyzes the conversion of S-adenosyl-L-methionine (SAM) to carboxy-S-adenosyl-L-methionine (Cx-SAM). The sequence is that of Carboxy-S-adenosyl-L-methionine synthase from Shewanella oneidensis (strain ATCC 700550 / JCM 31522 / CIP 106686 / LMG 19005 / NCIMB 14063 / MR-1).